Consider the following 188-residue polypeptide: Elongation factor P (188 aa).

At lysine 34 the chain carries N6-(3,6-diaminohexanoyl)-5-hydroxylysine.

This sequence belongs to the elongation factor P family. In terms of processing, may be beta-lysylated on the epsilon-amino group of Lys-34 by the combined action of EpmA and EpmB, and then hydroxylated on the C5 position of the same residue by EpmC (if this protein is present). Lysylation is critical for the stimulatory effect of EF-P on peptide-bond formation. The lysylation moiety may extend toward the peptidyltransferase center and stabilize the terminal 3-CCA end of the tRNA. Hydroxylation of the C5 position on Lys-34 may allow additional potential stabilizing hydrogen-bond interactions with the P-tRNA.

It localises to the cytoplasm. It participates in protein biosynthesis; polypeptide chain elongation. Functionally, involved in peptide bond synthesis. Alleviates ribosome stalling that occurs when 3 or more consecutive Pro residues or the sequence PPG is present in a protein, possibly by augmenting the peptidyl transferase activity of the ribosome. Modification of Lys-34 is required for alleviation. The protein is Elongation factor P of Proteus mirabilis (strain HI4320).